The primary structure comprises 241 residues: ATP synthase subunit a (241 aa).

5 helical membrane-spanning segments follow: residues 30-50 (GQVF…ISLG), 91-111 (FIGT…LIPW), 128-148 (INTT…AGLS), 193-213 (LVVG…VMFL), and 214-234 (GLFT…YYIG).

It belongs to the ATPase A chain family. In terms of assembly, F-type ATPases have 2 components, CF(1) - the catalytic core - and CF(0) - the membrane proton channel. CF(1) has five subunits: alpha(3), beta(3), gamma(1), delta(1), epsilon(1). CF(0) has four main subunits: a, b, b' and c.

The protein resides in the cellular thylakoid membrane. Its function is as follows. Key component of the proton channel; it plays a direct role in the translocation of protons across the membrane. The chain is ATP synthase subunit a from Prochlorococcus marinus (strain MIT 9515).